A 202-amino-acid polypeptide reads, in one-letter code: Small ribosomal subunit protein uS4c (202 aa).

Positions 90-153 (MRLDNIIFRL…KSQAIISKNI (64 aa)) constitute an S4 RNA-binding domain.

The protein belongs to the universal ribosomal protein uS4 family. As to quaternary structure, part of the 30S ribosomal subunit. Contacts protein S5. The interaction surface between S4 and S5 is involved in control of translational fidelity.

It localises to the plastid. Its subcellular location is the chloroplast. In terms of biological role, one of the primary rRNA binding proteins, it binds directly to 16S rRNA where it nucleates assembly of the body of the 30S subunit. Functionally, with S5 and S12 plays an important role in translational accuracy. The sequence is that of Small ribosomal subunit protein uS4c (rps4) from Splachnum sphaericum (Pinkstink dung moss).